The primary structure comprises 418 residues: Serine hydroxymethyltransferase (418 aa).

Residues Leu-121 and 125–127 each bind (6S)-5,6,7,8-tetrahydrofolate; that span reads GHL. The residue at position 230 (Lys-230) is an N6-(pyridoxal phosphate)lysine. (6S)-5,6,7,8-tetrahydrofolate-binding positions include Glu-246 and 355-357; that span reads SPF.

Belongs to the SHMT family. As to quaternary structure, homodimer. The cofactor is pyridoxal 5'-phosphate.

It localises to the cytoplasm. It carries out the reaction (6R)-5,10-methylene-5,6,7,8-tetrahydrofolate + glycine + H2O = (6S)-5,6,7,8-tetrahydrofolate + L-serine. It participates in one-carbon metabolism; tetrahydrofolate interconversion. It functions in the pathway amino-acid biosynthesis; glycine biosynthesis; glycine from L-serine: step 1/1. Its function is as follows. Catalyzes the reversible interconversion of serine and glycine with tetrahydrofolate (THF) serving as the one-carbon carrier. This reaction serves as the major source of one-carbon groups required for the biosynthesis of purines, thymidylate, methionine, and other important biomolecules. Also exhibits THF-independent aldolase activity toward beta-hydroxyamino acids, producing glycine and aldehydes, via a retro-aldol mechanism. The sequence is that of Serine hydroxymethyltransferase from Streptococcus pneumoniae serotype 4 (strain ATCC BAA-334 / TIGR4).